The chain runs to 342 residues: Non-homologous end-joining protein 1 (342 aa).

2 helical membrane passes run 27–47 and 129–149; these read LLLF…LVSL and MFYM…NLST. The tract at residues 173 to 342 is interaction with LIF1; sequence LRDLDGGSKV…RKFGKVRIKN (170 aa). Residues 270–342 are disordered; that stretch reads ADPTNEARPN…RKFGKVRIKN (73 aa). Residues 286–296 are compositionally biased toward basic and acidic residues; that stretch reads PKTDFKPKSRE. Residues 297-312 show a composition bias toward polar residues; that stretch reads SSTSSQLRLENFSESE. Positions 331–342 are enriched in basic residues; the sequence is KKRKFGKVRIKN.

It belongs to the XRCC4-XLF family. XLF subfamily. In terms of assembly, interacts (via C-terminus) with LIF1 (via N-terminus); the interaction is direct. Interacts with DNL4.

It is found in the cytoplasm. The protein resides in the nucleus membrane. In terms of biological role, involved in non-homologous end joining (NHEJ). Facilitates the transport of LIF1 into the nucleus, where it can interact with DNA ligase DNL4 to repair double-strand breaks (DSB). Mediates mating-type regulation of NHEJ. Prevents chromosome circularisation by NHEJ in absence of telomerase. The protein is Non-homologous end-joining protein 1 (NEJ1) of Saccharomyces cerevisiae (strain ATCC 204508 / S288c) (Baker's yeast).